Reading from the N-terminus, the 40-residue chain is Mu-thomitoxin-Hme1b (40 aa).

3 disulfides stabilise this stretch: cysteine 2-cysteine 18, cysteine 9-cysteine 22, and cysteine 17-cysteine 33.

The protein belongs to the neurotoxin 19 (CSTX) family. Contains 3 disulfide bonds. In terms of tissue distribution, expressed by the venom gland.

Its subcellular location is the secreted. Its function is as follows. Blocks the Nav1.2/SCN2A, Nav1.4/SCN4A, Nav1.5/SCN5A and Nav1.6/SCN8A sodium channels. Shows a slight preference for the Nav1.2 and Nav1.4 channels. Reduces the peak amplitude of the sodium current and negatively shifts the steady-state inactivation process. Does not shift the threshold potential of activation or the voltage corresponding to maximal current. Does not change the reversal potential of the sodium current. May act on site 1 of the receptor. This Heriaeus mellotteei (Crab spider) protein is Mu-thomitoxin-Hme1b.